We begin with the raw amino-acid sequence, 182 residues long: NADH-quinone oxidoreductase subunit I (182 aa).

2 consecutive 4Fe-4S ferredoxin-type domains span residues 52 to 82 (LTRD…LQKA) and 92 to 121 (EFFR…LTPD). [4Fe-4S] cluster contacts are provided by Cys-62, Cys-65, Cys-68, Cys-72, Cys-101, Cys-104, Cys-107, and Cys-111.

This sequence belongs to the complex I 23 kDa subunit family. NDH-1 is composed of 13 different subunits. Subunits NuoA, H, J, K, L, M, N constitute the membrane sector of the complex. The cofactor is [4Fe-4S] cluster.

Its subcellular location is the cell inner membrane. The catalysed reaction is a quinone + NADH + 5 H(+)(in) = a quinol + NAD(+) + 4 H(+)(out). In terms of biological role, NDH-1 shuttles electrons from NADH, via FMN and iron-sulfur (Fe-S) centers, to quinones in the respiratory chain. The immediate electron acceptor for the enzyme in this species is believed to be ubiquinone. Couples the redox reaction to proton translocation (for every two electrons transferred, four hydrogen ions are translocated across the cytoplasmic membrane), and thus conserves the redox energy in a proton gradient. The chain is NADH-quinone oxidoreductase subunit I from Pseudomonas aeruginosa (strain LESB58).